Consider the following 392-residue polypeptide: Putative nickel insertion protein (392 aa).

This sequence belongs to the LarC family.

The chain is Putative nickel insertion protein from Pelobacter propionicus (strain DSM 2379 / NBRC 103807 / OttBd1).